Consider the following 638-residue polypeptide: uncharacterized protein (638 aa).

Residues 1–138 (MDLVELDYLS…KIENALLKYK (138 aa)) enclose the CID domain. Disordered stretches follow at residues 318-338 (QPPL…YSLS) and 615-638 (LGKR…QESK).

This is an uncharacterized protein from Schizosaccharomyces pombe (strain 972 / ATCC 24843) (Fission yeast).